Here is a 398-residue protein sequence, read N- to C-terminus: Phosphoglycerate kinase (398 aa).

Substrate contacts are provided by residues 21–23 (DFN), Arg-36, 59–62 (HLGR), Arg-119, and Arg-157. ATP contacts are provided by residues Lys-208, Gly-296, Glu-327, and 354-357 (GGDS).

This sequence belongs to the phosphoglycerate kinase family. As to quaternary structure, monomer.

The protein resides in the cytoplasm. It carries out the reaction (2R)-3-phosphoglycerate + ATP = (2R)-3-phospho-glyceroyl phosphate + ADP. Its pathway is carbohydrate degradation; glycolysis; pyruvate from D-glyceraldehyde 3-phosphate: step 2/5. The chain is Phosphoglycerate kinase from Streptococcus mutans serotype c (strain ATCC 700610 / UA159).